We begin with the raw amino-acid sequence, 179 residues long: Inner membrane-spanning protein YciB (179 aa).

The next 5 membrane-spanning stretches (helical) occupy residues 22–42, 50–70, 76–96, 121–141, and 149–169; these read IYVA…FTWF, MTLI…VFHN, WKVT…QLVL, LAWA…AFWL, and FKVF…GVYI.

The protein belongs to the YciB family.

It is found in the cell inner membrane. In terms of biological role, plays a role in cell envelope biogenesis, maintenance of cell envelope integrity and membrane homeostasis. This is Inner membrane-spanning protein YciB from Serratia proteamaculans (strain 568).